A 505-amino-acid chain; its full sequence is Deoxyguanosinetriphosphate triphosphohydrolase (505 aa).

The 208-residue stretch at 66–273 (RLTHSMEVQQ…MEAADDISYC (208 aa)) folds into the HD domain.

It belongs to the dGTPase family. Type 1 subfamily. As to quaternary structure, homotetramer. Mg(2+) serves as cofactor.

The enzyme catalyses dGTP + H2O = 2'-deoxyguanosine + triphosphate + H(+). In terms of biological role, dGTPase preferentially hydrolyzes dGTP over the other canonical NTPs. The sequence is that of Deoxyguanosinetriphosphate triphosphohydrolase from Shigella boydii serotype 4 (strain Sb227).